The sequence spans 651 residues: E3 SUMO-protein ligase PIAS1 (651 aa).

N-acetylalanine is present on A2. A required for interaction with MSX1 region spans residues 2 to 200; sequence ADSAELKQMV…KCDFTVQVQL (199 aa). The SAP domain maps to 11 to 45; that stretch reads VMSLRVSELQVLLGYAGRNKHGRKHELLTKALHLL. The LXXLL motif signature appears at 19 to 23; that stretch reads LQVLL. Residues K40 and K46 each participate in a glycyl lysine isopeptide (Lys-Gly) (interchain with G-Cter in SUMO2) cross-link. Positions 56 to 64 match the Nuclear localization signal motif; that stretch reads KIKELYRRR. The 165-residue stretch at 124-288 folds into the PINIT domain; the sequence is HLTSALHPVH…SMAVYLVKQL (165 aa). Glycyl lysine isopeptide (Lys-Gly) (interchain with G-Cter in SUMO2) cross-links involve residues K137 and K238. The SP-RING-type zinc-finger motif lies at 320 to 405; it reads PDSEIATTSL…LKYCTDCDEI (86 aa). Zn(2+) contacts are provided by C351, H353, C374, and C377. The Nuclear localization signal motif lies at 368–380; it reads KKPTWVCPVCDKK. K453 participates in a covalent cross-link: Glycyl lysine isopeptide (Lys-Gly) (interchain with G-Cter in SUMO2). The segment at 462–473 is SUMO1-binding; it reads LTIDSSSDEEEE. Positions 465-511 are disordered; it reads DSSSDEEEEEPSAKRTCPSLSPTSPLNNKGILSLPHQASPVSRTPSL. S467, S468, S483, and S485 each carry phosphoserine. The segment covering 482-491 has biased composition (polar residues); that stretch reads PSLSPTSPLN. T487 carries the post-translational modification Phosphothreonine. S488 carries the post-translational modification Phosphoserine. K493 is covalently cross-linked (Glycyl lysine isopeptide (Lys-Gly) (interchain with G-Cter in SUMO2)). Residues S503, S510, and S522 each carry the phosphoserine modification. 2 consecutive repeat copies span residues 520 to 523 and 557 to 560. The interval 520–615 is 4 X 4 AA repeats of N-T-S-L; that stretch reads NTSLIQDYRH…GSSSGSNSSL (96 aa). The stretch at 598–601 is one 3; approximate repeat; the sequence is STSL. Residues 599 to 621 are compositionally biased toward low complexity; it reads TSLPTTNGSSSGSNSSLVSSNSL. Residues 599–632 are disordered; sequence TSLPTTNGSSSGSNSSLVSSNSLRESHSHTVTNR. One copy of the 4; approximate repeat lies at 612–615; it reads NSSL.

The protein belongs to the PIAS family. In terms of assembly, interacts with NCOA2 and AR. Interacts with NR2C1; the interaction promotes its sumoylation. Interacts with DDX21, CSRP2, AXIN1, JUN, UBE2I, SUMO1, SATB2, PLAG1, TP53 and STAT1 (dimer), following IFNA1-stimulation. Interacts with SP3 (preferentially when SUMO-modified). Interacts with KLF8; the interaction results in SUMO ligation and repression of KLF8 transcriptional activity and of its cell cycle progression into G(1) phase. Interacts with CHUK/IKKA; this interaction induces PIAS1 phosphorylation. Interacts with PTK2/FAK1; the interaction promotes its sumoylation. Interacts with DDX5. Interacts with PML. Interacts with MTA1. Interacts with SUMO1P1/SUMO5. Interacts with PRDM1/Blimp-1. Interacts (via N-terminus) with MSX1 (via C-terminus); the interaction is required for the localization of both proteins to the nuclear periphery and specific binding of MSX1 to the core enhancer region in target gene promoters. As to quaternary structure, (Microbial infection) Interacts with ebolavirus VP35; this interaction mediates the sumoylation of IRF7 and contributes to the viral inhibition of IFN-type I production. Post-translationally, sumoylated. In terms of tissue distribution, expressed in numerous tissues with highest level in testis.

It localises to the nucleus. The protein localises to the nucleus speckle. Its subcellular location is the PML body. The protein resides in the cytoplasm. It is found in the cytoskeleton. It functions in the pathway protein modification; protein sumoylation. Functionally, functions as an E3-type small ubiquitin-like modifier (SUMO) ligase, stabilizing the interaction between UBE2I and the substrate, and as a SUMO-tethering factor. Catalyzes sumoylation of various proteins, such as CEBPB, MRE11, MTA1, PTK2 and PML. Plays a crucial role as a transcriptional coregulation in various cellular pathways, including the STAT pathway, the p53 pathway and the steroid hormone signaling pathway. In vitro, binds A/T-rich DNA. The effects of this transcriptional coregulation, transactivation or silencing, may vary depending upon the biological context. Mediates sumoylation of MRE11, stabilizing MRE11 on chromatin during end resection. Sumoylates PML (at 'Lys-65' and 'Lys-160') and PML-RAR and promotes their ubiquitin-mediated degradation. PIAS1-mediated sumoylation of PML promotes its interaction with CSNK2A1/CK2 which in turn promotes PML phosphorylation and degradation. Enhances the sumoylation of MTA1 and may participate in its paralog-selective sumoylation. Plays a dynamic role in adipogenesis by promoting the SUMOylation and degradation of CEBPB. Mediates the nuclear mobility and localization of MSX1 to the nuclear periphery, whereby MSX1 is brought into the proximity of target myoblast differentiation factor genes. Also required for the binding of MSX1 to the core enhancer region in target gene promoter regions, independent of its sumoylation activity. Capable of binding to the core enhancer region TAAT box in the MYOD1 gene promoter. In terms of biological role, (Microbial infection) Restricts Epstein-Barr virus (EBV) lytic replication by acting as an inhibitor for transcription factors involved in lytic gene expression. The virus can use apoptotic caspases to antagonize PIAS1-mediated restriction and express its lytic genes. The polypeptide is E3 SUMO-protein ligase PIAS1 (PIAS1) (Homo sapiens (Human)).